We begin with the raw amino-acid sequence, 723 residues long: ESX-1 secretion-associated protein EspK (723 aa).

Disordered regions lie at residues 175–360 and 393–451; these read DLLQ…TPAA and SGAG…GTPV. The segment covering 200 to 209 has biased composition (low complexity); that stretch reads TPGTPITPGT. Pro residues predominate over residues 210-229; the sequence is PITPIPGAPVTPITPTPGTP. The segment covering 230 to 249 has biased composition (low complexity); it reads VTPVTPGKPVTPVTPVKPGT. Pro residues-rich tracts occupy residues 250–265 and 274–308; these read PGEP…PVAP and PVTP…PSGP. 3 stretches are compositionally biased toward low complexity: residues 309-319, 393-404, and 412-426; these read ATPGTPGGEPA, SGAGSHAATGRA, and AAAP…RTAP. Residues 432–444 show a composition bias toward basic and acidic residues; sequence STDHIDKPDRSES.

The protein localises to the cytoplasm. Its function is as follows. May act as a chaperone that facilitates EspB secretion through an interaction with EccCb1. The chain is ESX-1 secretion-associated protein EspK from Mycobacterium tuberculosis (strain CDC 1551 / Oshkosh).